A 436-amino-acid chain; its full sequence is GDP-mannose 6-dehydrogenase (436 aa).

Positions 10, 11, 30, 35, 86, and 124 each coordinate NAD(+). GDP-alpha-D-mannuronate is bound by residues glutamate 161, lysine 210, asparagine 214, histidine 217, asparagine 225, tyrosine 256, tyrosine 257, arginine 259, and glycine 265. Residue cysteine 268 is part of the active site. Lysine 271 provides a ligand contact to NAD(+). Residue lysine 324 coordinates GDP-alpha-D-mannuronate. An NAD(+)-binding site is contributed by arginine 331.

Belongs to the UDP-glucose/GDP-mannose dehydrogenase family.

The enzyme catalyses GDP-alpha-D-mannose + 2 NAD(+) + H2O = GDP-alpha-D-mannuronate + 2 NADH + 3 H(+). It participates in glycan biosynthesis; alginate biosynthesis. Its function is as follows. Catalyzes the oxidation of guanosine diphospho-D-mannose (GDP-D-mannose) to GDP-D-mannuronic acid, a precursor for alginate polymerization. The alginate layer causes a mucoid phenotype and is essential for cyst formation. The polypeptide is GDP-mannose 6-dehydrogenase (algD) (Azotobacter vinelandii).